A 223-amino-acid polypeptide reads, in one-letter code: Urease accessory protein UreG (223 aa).

Residues 1-30 (MAKHSHDHTHDHHDRPRRVRKPGEPLRIGV) are disordered. Residue 32–39 (GPVGSGKT) participates in GTP binding.

This sequence belongs to the SIMIBI class G3E GTPase family. UreG subfamily. Homodimer. UreD, UreF and UreG form a complex that acts as a GTP-hydrolysis-dependent molecular chaperone, activating the urease apoprotein by helping to assemble the nickel containing metallocenter of UreC. The UreE protein probably delivers the nickel.

It localises to the cytoplasm. Its function is as follows. Facilitates the functional incorporation of the urease nickel metallocenter. This process requires GTP hydrolysis, probably effectuated by UreG. In Mycobacterium ulcerans (strain Agy99), this protein is Urease accessory protein UreG.